A 159-amino-acid polypeptide reads, in one-letter code: U1 small nuclear ribonucleoprotein C (159 aa).

The Matrin-type zinc finger occupies 4 to 36 (FYCDYCDTYLTHDSPSVRKTHCSGRKHKENVKD). Disordered stretches follow at residues 63–95 (PPTP…MPAP) and 139–159 (MRPP…RPDR). Positions 77 to 95 (IPPPPSMGGPPRPGMMPAP) are enriched in pro residues.

Belongs to the U1 small nuclear ribonucleoprotein C family. In terms of assembly, component of the U1 snRNP. The U1 snRNP is composed of the U1 snRNA and the 7 core Sm proteins snrpb, snrpd1, snrpd2, snrpd3, snrpe, snrpf and snrpg that assemble in a heptameric protein ring on the Sm site of the small nuclear RNA to form the core snRNP, and at least 3 U1 snRNP-specific proteins snrnp70/U1-70K, snrpa/U1-A and snrpc/U1-C. snrpc/U1-C interacts with U1 snRNA and the 5' splice-site region of the pre-mRNA.

It is found in the nucleus. Its function is as follows. Component of the spliceosomal U1 snRNP, which is essential for recognition of the pre-mRNA 5' splice-site and the subsequent assembly of the spliceosome. snrpc/U1-C is directly involved in initial 5' splice-site recognition for both constitutive and regulated alternative splicing. The interaction with the 5' splice-site seems to precede base-pairing between the pre-mRNA and the U1 snRNA. Stimulates commitment or early (E) complex formation by stabilizing the base pairing of the 5' end of the U1 snRNA and the 5' splice-site region. This is U1 small nuclear ribonucleoprotein C from Xenopus tropicalis (Western clawed frog).